The sequence spans 182 residues: Sec-independent protein translocase protein TatB (182 aa).

A helical transmembrane segment spans residues M1–G21. Disordered stretches follow at residues Q87–E107 and T121–P182. The span at A168–P182 shows a compositional bias: low complexity.

It belongs to the TatB family. The Tat system comprises two distinct complexes: a TatABC complex, containing multiple copies of TatA, TatB and TatC subunits, and a separate TatA complex, containing only TatA subunits. Substrates initially bind to the TatABC complex, which probably triggers association of the separate TatA complex to form the active translocon.

It localises to the cell inner membrane. Functionally, part of the twin-arginine translocation (Tat) system that transports large folded proteins containing a characteristic twin-arginine motif in their signal peptide across membranes. Together with TatC, TatB is part of a receptor directly interacting with Tat signal peptides. TatB may form an oligomeric binding site that transiently accommodates folded Tat precursor proteins before their translocation. This Salmonella choleraesuis (strain SC-B67) protein is Sec-independent protein translocase protein TatB.